The sequence spans 410 residues: Phospho-N-acetylmuramoyl-pentapeptide-transferase (410 aa).

10 helical membrane passes run 27–47, 77–97, 99–119, 140–160, 213–233, 248–268, 288–308, 312–332, 337–357, and 389–409; these read RMIL…PYFI, TPTM…VLWM, LTHI…LIGG, LFFQ…SSVN, PVVT…FFVI, GLLA…AFVS, IAIY…YNGY, VFMG…SAVL, FLLG…ILQV, and VIRF…SLKF.

The protein belongs to the glycosyltransferase 4 family. MraY subfamily. It depends on Mg(2+) as a cofactor.

It localises to the cell inner membrane. The catalysed reaction is UDP-N-acetyl-alpha-D-muramoyl-L-alanyl-gamma-D-glutamyl-meso-2,6-diaminopimeloyl-D-alanyl-D-alanine + di-trans,octa-cis-undecaprenyl phosphate = di-trans,octa-cis-undecaprenyl diphospho-N-acetyl-alpha-D-muramoyl-L-alanyl-D-glutamyl-meso-2,6-diaminopimeloyl-D-alanyl-D-alanine + UMP. It functions in the pathway cell wall biogenesis; peptidoglycan biosynthesis. Functionally, catalyzes the initial step of the lipid cycle reactions in the biosynthesis of the cell wall peptidoglycan: transfers peptidoglycan precursor phospho-MurNAc-pentapeptide from UDP-MurNAc-pentapeptide onto the lipid carrier undecaprenyl phosphate, yielding undecaprenyl-pyrophosphoryl-MurNAc-pentapeptide, known as lipid I. The polypeptide is Phospho-N-acetylmuramoyl-pentapeptide-transferase (Protochlamydia amoebophila (strain UWE25)).